The chain runs to 394 residues: UPF0284 protein SYNW1869 (394 aa).

The protein belongs to the UPF0284 family.

The protein is UPF0284 protein SYNW1869 of Parasynechococcus marenigrum (strain WH8102).